The sequence spans 261 residues: Probable glutathione-independent glyoxalase hsp3103 (261 aa).

Active-site residues include cysteine 162, histidine 163, and glutamate 196.

The protein belongs to the peptidase C56 family. HSP31-like subfamily.

It carries out the reaction methylglyoxal + H2O = (R)-lactate + H(+). In terms of biological role, catalyzes the conversion of methylglyoxal (MG) to D-lactate in a single glutathione (GSH)-independent step. May play a role in detoxifying endogenously produced glyoxals. Involved in protection against reactive oxygen species (ROS). This is Probable glutathione-independent glyoxalase hsp3103 from Schizosaccharomyces pombe (strain 972 / ATCC 24843) (Fission yeast).